We begin with the raw amino-acid sequence, 339 residues long: Methyltransferase ptaI (339 aa).

The protein belongs to the methyltransferase superfamily.

Its pathway is secondary metabolite biosynthesis. Methyltransferase; part of the gene cluster that mediates the biosynthesis of pestheic acid, a diphenyl ether which is a biosynthetic precursor of the unique chloropupukeananes. The biosynthesis initiates from condensation of acetate and malonate units catalyzed by the non-reducing PKS ptaA. As the ptaA protein is TE/CLC domain-deficient, hydrolysis and Claisen cyclization of the polyketide could be catalyzed by ptaB containing a beta-lactamase domain. The ptaB protein might hydrolyze the thioester bond between the ACP of ptaA and the intermediate to release atrochrysone carboxylic acid, which is spontaneously dehydrated to form endocrocin anthrone. Endocrocin anthrone is then converted to endocrocin, catalyzed by the anthrone oxygenase ptaC. Spontaneous decarboxylation of endocrocin occurs to generate emodin. An O-methyltransferase (ptaH or ptaI) could methylate emodin to form physcion. PtaJ could then catalyze the oxidative cleavage of physcion, and rotation of the intermediate could then afford desmethylisosulochrin. PtaF, a putative NADH-dependent oxidoreductase, might also participate in the oxidative cleavage step. Desmethylisosulochrin is then transformed by another O-methyltransferase (ptaH or ptaI) to form isosulochrin. Chlorination of isosulochrin by ptaM in the cyclohexadienone B ring then produces chloroisosulochrin. PtaE is responsible for the oxidative coupling reactions of both benzophenones isosulouchrin and chloroisosulochrin to RES-1214-1 and pestheic acid respectively, regardless of chlorination. This is Methyltransferase ptaI from Pestalotiopsis fici (strain W106-1 / CGMCC3.15140).